The primary structure comprises 60 residues: MAVQQVKKSRSKRDIRRSHDSLTNPTLSTDKSTGELHLRHHVSPNGFYKGRKVVDTKSED.

Residues 1-60 (MAVQQVKKSRSKRDIRRSHDSLTNPTLSTDKSTGELHLRHHVSPNGFYKGRKVVDTKSED) form a disordered region. Over residues 7 to 16 (KKSRSKRDIR) the composition is skewed to basic residues. Positions 22–31 (LTNPTLSTDK) are enriched in polar residues.

This sequence belongs to the bacterial ribosomal protein bL32 family.

The chain is Large ribosomal subunit protein bL32 from Francisella tularensis subsp. tularensis (strain SCHU S4 / Schu 4).